The primary structure comprises 419 residues: MAGFGAMEKFLVEYKSAVEKKLAEYKCNTNTAIELKLVRFPEDLENDIRTFFPEYTHQLFGDDETAFGYKGLKILLYYIAGSLSTMFRVEYASKVDENFDCVEADDVEGKIRQIIPPGFCTNTNDFLSLLEKEADFKPFGTLLHTYSVPSPTGGENFTFQIYKADMTCRGFREYHERLQTFLMWFIETASFIDVDDERWHYFLVFEKYNKDGATLFATVGYMTVYNYYVYPDKTRPRVSQMLILTPFQGQGHGAQLLETVHRYYIASSSVLDITAEDPSKSYVKLRDFVLVKLCQDLPCFSRERLLQGFNEDMAIQAQQKFKINKQHARRVYEILRLLVTDMSDAEQCRSYRLDIKRRLISPYKKKQTDLAKMRKCLRPEELTNQMNQIEISVQHEQLEEQFQELVEDYRRVIERLAQE.

Ala-2 carries the post-translational modification N-acetylalanine. Lys-9 and Lys-15 each carry N6-acetyllysine. An interaction with histone H4 N-terminus region spans residues Asp-62–Glu-64. Ser-190 carries the post-translational modification Phosphoserine. The interval Tyr-225 to Tyr-227 is interaction with histone H4 N-terminus. Residues Met-241–Ile-243 and Gln-248–Ala-254 contribute to the acetyl-CoA site. The active-site Proton donor/acceptor is Glu-276. Ser-343 carries the post-translational modification Phosphoserine.

It belongs to the HAT1 family. As to quaternary structure, catalytic subunit of the type B histone acetyltransferase (HAT) complex, composed of RBBP7 and HAT1. Interacts with histones H4 and H2A. The interaction is dependent of the ability of RBBP7 to bind to the N-terminus of histones. Component of the histone H3.1 and H3.3 complexes. In terms of processing, phosphorylated by AMPK at Ser-190; phosphorylation increases HAT1 activity.

Its subcellular location is the nucleus matrix. The protein localises to the mitochondrion. It catalyses the reaction L-lysyl-[protein] + acetyl-CoA = N(6)-acetyl-L-lysyl-[protein] + CoA + H(+). Histone acetyltransferase that plays a role in different biological processes including cell cycle progression, glucose metabolism, histone production or DNA damage repair. Coordinates histone production and acetylation via H4 promoter binding. Acetylates histone H4 at 'Lys-5' (H4K5ac) and 'Lys-12' (H4K12ac) and, to a lesser extent, histone H2A at 'Lys-5' (H2AK5ac). Drives H4 production by chromatin binding to support chromatin replication and acetylation. Since transcription of H4 genes is tightly coupled to S-phase, plays an important role in S-phase entry and progression. Promotes homologous recombination in DNA repair by facilitating histone turnover and incorporation of acetylated H3.3 at sites of double-strand breaks. In addition, acetylates other substrates such as chromatin-related proteins. Also acetylates RSAD2 which mediates the interaction of ubiquitin ligase UBE4A with RSAD2 leading to RSAD2 ubiquitination and subsequent degradation. The protein is Histone acetyltransferase type B catalytic subunit (Hat1) of Rattus norvegicus (Rat).